The sequence spans 254 residues: 3-oxo-5-alpha-steroid 4-dehydrogenase 2 (254 aa).

4 helical membrane passes run 8-28 (SPVL…LYFA), 72-92 (PRSL…AHYF), 146-166 (FSLG…SDYI), and 206-226 (LATW…FLGL).

This sequence belongs to the steroid 5-alpha reductase family.

The protein resides in the microsome membrane. It is found in the endoplasmic reticulum membrane. The catalysed reaction is a 3-oxo-5alpha-steroid + NADP(+) = a 3-oxo-Delta(4)-steroid + NADPH + H(+). The enzyme catalyses 17beta-hydroxy-5alpha-androstan-3-one + NADP(+) = testosterone + NADPH + H(+). It catalyses the reaction 5alpha-pregnane-3,20-dione + NADP(+) = progesterone + NADPH + H(+). Its function is as follows. Converts testosterone (T) into 5-alpha-dihydrotestosterone (DHT) and progesterone or corticosterone into their corresponding 5-alpha-3-oxosteroids. It plays a central role in sexual differentiation and androgen physiology. This chain is 3-oxo-5-alpha-steroid 4-dehydrogenase 2 (SRD5A2), found in Sus scrofa (Pig).